Reading from the N-terminus, the 403-residue chain is MRSWSAPKVPKLPGSGLPLRLYDTATREVRETEPSGKARMYVCGITPYDATHLGHANTYLAFDLVNRAWRDAGHDVHYTQNTTDVDDPLLERAQAIGVDWRELADREIELFRTDMEALRILPPRDYVAVTEVIDDIAEVIVRLMERGATYRIGDDVYFSVAAAPKFGAISGYDEETMRRLFAERGGDPGRAGKRNPLDWLLWRGERPGEPSWESPFGRGRPGWHVECTAIALRHLGPGFDVSGGGSDLIFPHHEMGACEGHVATGEWPFARAYVHAGMVAYEGEKMSKSRGNLVFVSELRHEADPMAIRLALLARHYRSDWEWTPDRLTEAEARLARWRAAVARPAGPDGAALLARVRERIADDLDAPGALALIDAWAAADGDDASAPGLVRDMVDALLGVAL.

Residue C43 participates in Zn(2+) binding. L-cysteinyl-5'-AMP contacts are provided by residues 43–46 (CGIT), T58, and 81–83 (NTT). Residues 45-55 (ITPYDATHLGH) carry the 'HIGH' region motif. Positions 183 to 188 (ERGGDP) match the 'ERGGDP' region motif. Residue W223 participates in L-cysteinyl-5'-AMP binding. A Zn(2+)-binding site is contributed by C227. Position 245–247 (245–247 (GSD)) interacts with L-cysteinyl-5'-AMP. H252 is a binding site for Zn(2+). Residue V279 participates in L-cysteinyl-5'-AMP binding. Positions 285-289 (KMSKS) match the 'KMSKS' region motif.

The protein belongs to the class-I aminoacyl-tRNA synthetase family. MshC subfamily. As to quaternary structure, monomer. Zn(2+) is required as a cofactor.

It catalyses the reaction 1D-myo-inositol 2-amino-2-deoxy-alpha-D-glucopyranoside + L-cysteine + ATP = 1D-myo-inositol 2-(L-cysteinylamino)-2-deoxy-alpha-D-glucopyranoside + AMP + diphosphate + H(+). Functionally, catalyzes the ATP-dependent condensation of GlcN-Ins and L-cysteine to form L-Cys-GlcN-Ins. The protein is L-cysteine:1D-myo-inositol 2-amino-2-deoxy-alpha-D-glucopyranoside ligase of Thermobispora bispora (strain ATCC 19993 / DSM 43833 / CBS 139.67 / JCM 10125 / KCTC 9307 / NBRC 14880 / R51).